The sequence spans 222 residues: Superoxide dismutase [Cu-Zn], chloroplastic (222 aa).

The transit peptide at 1–68 (MAAHTILASA…AASKPLTIVA (68 aa)) directs the protein to the chloroplast. His-114, His-116, and His-131 together coordinate Cu cation. Cysteines 125 and 214 form a disulfide. Positions 131, 139, 148, and 151 each coordinate Zn(2+). His-188 serves as a coordination point for Cu cation.

This sequence belongs to the Cu-Zn superoxide dismutase family. Homotetramer. Requires Cu cation as cofactor. It depends on Zn(2+) as a cofactor.

The protein localises to the plastid. The protein resides in the chloroplast. The catalysed reaction is 2 superoxide + 2 H(+) = H2O2 + O2. Functionally, destroys radicals which are normally produced within the cells and which are toxic to biological systems. This is Superoxide dismutase [Cu-Zn], chloroplastic (SODCP) from Spinacia oleracea (Spinach).